A 278-amino-acid chain; its full sequence is 3-methyl-2-oxobutanoate hydroxymethyltransferase (278 aa).

Mg(2+) contacts are provided by D43 and D82. Residues 43–44 (DS), D82, and K112 each bind 3-methyl-2-oxobutanoate. E114 serves as a coordination point for Mg(2+). E181 serves as the catalytic Proton acceptor.

The protein belongs to the PanB family. Homodecamer; pentamer of dimers. Requires Mg(2+) as cofactor.

The protein resides in the cytoplasm. It carries out the reaction 3-methyl-2-oxobutanoate + (6R)-5,10-methylene-5,6,7,8-tetrahydrofolate + H2O = 2-dehydropantoate + (6S)-5,6,7,8-tetrahydrofolate. The protein operates within cofactor biosynthesis; (R)-pantothenate biosynthesis; (R)-pantoate from 3-methyl-2-oxobutanoate: step 1/2. Functionally, catalyzes the reversible reaction in which hydroxymethyl group from 5,10-methylenetetrahydrofolate is transferred onto alpha-ketoisovalerate to form ketopantoate. The chain is 3-methyl-2-oxobutanoate hydroxymethyltransferase from Bacillus cereus (strain ATCC 10987 / NRS 248).